Reading from the N-terminus, the 307-residue chain is N-acetylmuramic acid 6-phosphate etherase (307 aa).

Positions 62–225 constitute an SIS domain; that stretch reads IVAAFQKGGR…TTASMIRIGK (164 aa). Glutamate 90 functions as the Proton donor in the catalytic mechanism. The active site involves glutamate 121.

This sequence belongs to the GCKR-like family. MurNAc-6-P etherase subfamily. Homodimer.

It catalyses the reaction N-acetyl-D-muramate 6-phosphate + H2O = N-acetyl-D-glucosamine 6-phosphate + (R)-lactate. The protein operates within amino-sugar metabolism; 1,6-anhydro-N-acetylmuramate degradation. It participates in amino-sugar metabolism; N-acetylmuramate degradation. Its pathway is cell wall biogenesis; peptidoglycan recycling. Its function is as follows. Specifically catalyzes the cleavage of the D-lactyl ether substituent of MurNAc 6-phosphate, producing GlcNAc 6-phosphate and D-lactate. Together with AnmK, is also required for the utilization of anhydro-N-acetylmuramic acid (anhMurNAc) either imported from the medium or derived from its own cell wall murein, and thus plays a role in cell wall recycling. The chain is N-acetylmuramic acid 6-phosphate etherase from Rhizobium rhizogenes (strain K84 / ATCC BAA-868) (Agrobacterium radiobacter).